We begin with the raw amino-acid sequence, 197 residues long: dITP/XTP pyrophosphatase (197 aa).

9–14 (SNNAGK) is a binding site for substrate. Residue D70 is the Proton acceptor of the active site. Residue D70 participates in Mg(2+) binding. Residues S71, 153–156 (FGYD), K176, and 181–182 (HR) contribute to the substrate site.

It belongs to the HAM1 NTPase family. As to quaternary structure, homodimer. Requires Mg(2+) as cofactor.

The enzyme catalyses XTP + H2O = XMP + diphosphate + H(+). The catalysed reaction is dITP + H2O = dIMP + diphosphate + H(+). It catalyses the reaction ITP + H2O = IMP + diphosphate + H(+). Its function is as follows. Pyrophosphatase that catalyzes the hydrolysis of nucleoside triphosphates to their monophosphate derivatives, with a high preference for the non-canonical purine nucleotides XTP (xanthosine triphosphate), dITP (deoxyinosine triphosphate) and ITP. Seems to function as a house-cleaning enzyme that removes non-canonical purine nucleotides from the nucleotide pool, thus preventing their incorporation into DNA/RNA and avoiding chromosomal lesions. The protein is dITP/XTP pyrophosphatase of Chromobacterium violaceum (strain ATCC 12472 / DSM 30191 / JCM 1249 / CCUG 213 / NBRC 12614 / NCIMB 9131 / NCTC 9757 / MK).